The sequence spans 557 residues: Formate--tetrahydrofolate ligase 2 (557 aa).

66–73 serves as a coordination point for ATP; the sequence is TPAGEGKT.

This sequence belongs to the formate--tetrahydrofolate ligase family.

The enzyme catalyses (6S)-5,6,7,8-tetrahydrofolate + formate + ATP = (6R)-10-formyltetrahydrofolate + ADP + phosphate. It participates in one-carbon metabolism; tetrahydrofolate interconversion. The sequence is that of Formate--tetrahydrofolate ligase 2 from Streptococcus pyogenes serotype M12 (strain MGAS9429).